Here is a 515-residue protein sequence, read N- to C-terminus: Maturase K (515 aa).

The protein belongs to the intron maturase 2 family. MatK subfamily.

The protein resides in the plastid. Its subcellular location is the chloroplast. Usually encoded in the trnK tRNA gene intron. Probably assists in splicing its own and other chloroplast group II introns. The protein is Maturase K of Pinus roxburghii (Chir pine).